An 82-amino-acid chain; its full sequence is Conotoxin MiK42 (82 aa).

The N-terminal stretch at 1–22 (MKLTCALIVAMLLLTACQLITT) is a signal peptide. A propeptide spanning residues 23–49 (DDFRGRQQYRTARSRTKMQNYKIFRLT) is cleaved from the precursor. Intrachain disulfides connect cysteine 52–cysteine 67, cysteine 59–cysteine 70, and cysteine 66–cysteine 80.

It belongs to the conotoxin O1 superfamily. Expressed by the venom duct.

The protein localises to the secreted. The protein is Conotoxin MiK42 of Conus miles (Soldier cone).